The primary structure comprises 98 residues: uncharacterized protein (98 aa).

This is an uncharacterized protein from Sulfolobus islandicus filamentous virus (isolate Iceland/Hveragerdi) (SIFV).